The sequence spans 709 residues: DNA ligase (709 aa).

The disordered stretch occupies residues 1–20 (MTATHRGAQADASAPAGPLP). NAD(+) contacts are provided by residues 52–56 (DAEYD), 101–102 (SL), and E146. Catalysis depends on K148, which acts as the N6-AMP-lysine intermediate. Residues R169, E205, K322, and K346 each contribute to the NAD(+) site. 4 residues coordinate Zn(2+): C440, C443, C458, and C464. The BRCT domain maps to 623-709 (KAPAPLSGKT…AEAGAAPAQE (87 aa)).

The protein belongs to the NAD-dependent DNA ligase family. LigA subfamily. Requires Mg(2+) as cofactor. Mn(2+) is required as a cofactor.

It catalyses the reaction NAD(+) + (deoxyribonucleotide)n-3'-hydroxyl + 5'-phospho-(deoxyribonucleotide)m = (deoxyribonucleotide)n+m + AMP + beta-nicotinamide D-nucleotide.. Its function is as follows. DNA ligase that catalyzes the formation of phosphodiester linkages between 5'-phosphoryl and 3'-hydroxyl groups in double-stranded DNA using NAD as a coenzyme and as the energy source for the reaction. It is essential for DNA replication and repair of damaged DNA. The protein is DNA ligase of Cupriavidus necator (strain ATCC 17699 / DSM 428 / KCTC 22496 / NCIMB 10442 / H16 / Stanier 337) (Ralstonia eutropha).